We begin with the raw amino-acid sequence, 98 residues long: NADH-ubiquinone oxidoreductase chain 4L (98 aa).

Helical transmembrane passes span 1–21 (MSLVYMNIMTAFMVALAGLLM), 29–49 (SLLCLEGMMLSLFVMASLTIL), and 59–79 (MPIILLVFAACEAALGLSLLV).

The protein belongs to the complex I subunit 4L family. As to quaternary structure, core subunit of respiratory chain NADH dehydrogenase (Complex I) which is composed of 45 different subunits.

The protein resides in the mitochondrion inner membrane. The enzyme catalyses a ubiquinone + NADH + 5 H(+)(in) = a ubiquinol + NAD(+) + 4 H(+)(out). Its function is as follows. Core subunit of the mitochondrial membrane respiratory chain NADH dehydrogenase (Complex I) which catalyzes electron transfer from NADH through the respiratory chain, using ubiquinone as an electron acceptor. Part of the enzyme membrane arm which is embedded in the lipid bilayer and involved in proton translocation. The polypeptide is NADH-ubiquinone oxidoreductase chain 4L (MT-ND4L) (Cervus elaphus (Red deer)).